The chain runs to 689 residues: Histone-lysine N-methyltransferase MEDEA (689 aa).

Disordered regions lie at residues 1–20 (MEKENHEDDGEGLPPELNQI), 51–73 (HQSFDLNQPAAEDDNGGDNKSLL), and 169–188 (ELSSEEDEEDEEEDEEEIKK). Residues 1-109 (MEKENHEDDG…DEDQDYALEE (109 aa)) form an interaction with FIE region. Over residues 171–184 (SSEEDEEDEEEDEE) the composition is skewed to acidic residues. The region spanning 339–389 (NNTMWTPVEKDLYLKGIEIFGRNSCDVALNILRGLKTCLEIYNYMREQDQC) is the SANT domain. Residues 428-532 (RYPPALKKTT…TLGETPVQIQ (105 aa)) form the CXC domain. An SET domain is found at 544–659 (KKILIGKSDV…EGEELFFDYC (116 aa)). The tract at residues 666-689 (DWSRGREPRKTGASKRSKEARPAR) is disordered.

The protein belongs to the class V-like SAM-binding methyltransferase superfamily. Histone-lysine methyltransferase family. EZ subfamily. As to quaternary structure, interacts directly with FIE via its N-terminal domain. These two proteins are probably indirectly associated with FIS2. In plants, PcG complexes are probably composed of a member of the EZ family (CLF or MEA), FIE, and a member of the VEFS family (FIS2, VRN2 or EMF2). Interacts with TAF13. Expressed in unpollinated siliques that contain maturing gametophytes. Not expressed at early stages of floral development during early megagametogenesis.

It localises to the nucleus. The catalysed reaction is L-lysyl(27)-[histone H3] + 3 S-adenosyl-L-methionine = N(6),N(6),N(6)-trimethyl-L-lysyl(27)-[histone H3] + 3 S-adenosyl-L-homocysteine + 3 H(+). Its function is as follows. Polycomb group (PcG) protein. Catalytic subunit of some PcG multiprotein complex, which methylates 'Lys-27' of histone H3, leading to transcriptional repression of the affected target genes. Required to prevent the proliferation of the central cell of the female gametophyte by repressing target genes before fertilization. After fertilization, it probably also regulates the embryo and endosperm proliferation and anteroposterior organization during seed development. PcG proteins act by forming multiprotein complexes, which are required to maintain the transcriptionally repressive state of homeotic genes throughout development. PcG proteins are not required to initiate repression, but to maintain it during later stages of development. Interacts with the promoter and repress the transcription of genes such as PHE1 and PHE2, that are paternally active and maternally silenced genes. The protein is Histone-lysine N-methyltransferase MEDEA (MEA) of Arabidopsis thaliana (Mouse-ear cress).